Reading from the N-terminus, the 291-residue chain is Porphobilinogen deaminase (291 aa).

Cysteine 237 bears the S-(dipyrrolylmethanemethyl)cysteine mark.

Belongs to the HMBS family. In terms of assembly, monomer. The cofactor is dipyrromethane.

It catalyses the reaction 4 porphobilinogen + H2O = hydroxymethylbilane + 4 NH4(+). The protein operates within porphyrin-containing compound metabolism; protoporphyrin-IX biosynthesis; coproporphyrinogen-III from 5-aminolevulinate: step 2/4. Functionally, tetrapolymerization of the monopyrrole PBG into the hydroxymethylbilane pre-uroporphyrinogen in several discrete steps. The polypeptide is Porphobilinogen deaminase (Clostridium acetobutylicum (strain ATCC 824 / DSM 792 / JCM 1419 / IAM 19013 / LMG 5710 / NBRC 13948 / NRRL B-527 / VKM B-1787 / 2291 / W)).